A 145-amino-acid polypeptide reads, in one-letter code: UPF0763 protein CFF8240_1572 (145 aa).

It belongs to the UPF0763 family.

The polypeptide is UPF0763 protein CFF8240_1572 (Campylobacter fetus subsp. fetus (strain 82-40)).